We begin with the raw amino-acid sequence, 266 residues long: E3 ubiquitin-protein ligase RNF170 (266 aa).

The Lumenal segment spans residues 1–26 (MEGSVCVDGAAAPAPDEASLIEGVSN). Residues 27–47 (AVLLVLVLSVTLLAGLTTLLC) form a helical membrane-spanning segment. Over 48–209 (RSEQQRIHPE…GGLFWMFRVR (162 aa)) the chain is Cytoplasmic. Residues 88–131 (CPVCLQQAVLPVETNCGHLFCGSCIIAYWRYGTWLGAISCPICR) form an RING-type zinc finger. The helical transmembrane segment at 210-230 (ILLCVCGALAYLVSPLDFLPE) threads the bilayer. A topological domain (lumenal) is located at residue Gly231. The helical transmembrane segment at 232-252 (VLGLLGFLDDFFVILLLFIYI) threads the bilayer. Residues 253–266 (SIMYREVVTQRLAG) lie on the Cytoplasmic side of the membrane.

In terms of tissue distribution, highly expressed in the developing brain, and less within intersomitic structures of the trunk.

It localises to the endoplasmic reticulum membrane. The catalysed reaction is S-ubiquitinyl-[E2 ubiquitin-conjugating enzyme]-L-cysteine + [acceptor protein]-L-lysine = [E2 ubiquitin-conjugating enzyme]-L-cysteine + N(6)-ubiquitinyl-[acceptor protein]-L-lysine.. The protein operates within protein modification; protein ubiquitination. Functionally, E3 ubiquitin-protein ligase that plays an essential role in stimulus-induced inositol 1,4,5-trisphosphate receptor (ITPR) ubiquitination and degradation via the endoplasmic reticulum-associated degradation (ERAD) pathway. Also involved in ITPR turnover in resting cells. This chain is E3 ubiquitin-protein ligase RNF170 (rnf170), found in Danio rerio (Zebrafish).